Reading from the N-terminus, the 196-residue chain is Probable malonic semialdehyde reductase RutE (196 aa).

This sequence belongs to the nitroreductase family. HadB/RutE subfamily. The cofactor is FMN.

The catalysed reaction is 3-hydroxypropanoate + NADP(+) = 3-oxopropanoate + NADPH + H(+). Functionally, may reduce toxic product malonic semialdehyde to 3-hydroxypropionic acid, which is excreted. The chain is Probable malonic semialdehyde reductase RutE from Escherichia coli O157:H7.